The sequence spans 185 residues: Ribosome-recycling factor (185 aa).

This sequence belongs to the RRF family.

The protein resides in the cytoplasm. Functionally, responsible for the release of ribosomes from messenger RNA at the termination of protein biosynthesis. May increase the efficiency of translation by recycling ribosomes from one round of translation to another. This Campylobacter jejuni subsp. jejuni serotype O:23/36 (strain 81-176) protein is Ribosome-recycling factor.